The chain runs to 508 residues: Protein NODULATION SIGNALING PATHWAY 2 (508 aa).

Positions 75–98 (ITTTTTTTTTTDEEEEEMETTTTT) are disordered. Residues 108–500 (VGDDSKGLKL…RRLLSASLWT (393 aa)) form the GRAS domain. Positions 115 to 190 (LKLVHLLMAG…NNHHHHNNNK (76 aa)) are leucine repeat I (LRI). A VHIID region spans residues 209–273 (FQLLQDMSPY…NNGPHLRITA (65 aa)). Residues 240–244 (VHVID) carry the VHIID motif. The interval 289–321 (ETGRRLTSFAASLGQPFSFHHCRLDSDETFRPS) is leucine repeat II (LRII). The PFYRE stretch occupies residues 331–422 (LVFNCMLNLP…RVFFGPRIAG (92 aa)). An SAW region spans residues 425–500 (GRIYRTGGEE…RRLLSASLWT (76 aa)).

The protein belongs to the GRAS family. As to quaternary structure, interacts with RAM1. Interacts with IPN2 and RAD1. As to expression, expressed in roots, shoots and leaves.

It is found in the nucleus membrane. The protein localises to the endoplasmic reticulum. Transcriptional regulator essential for Nod-factor-induced gene expression. Acts downstream of calcium spiking and DMI3, a calcium/calmodulin-dependent protein kinase (CCaMK). Transcription factor involved in the control of strigolactone biosynthesis in roots through the activation of the beta-carotene isomerase D27, which participates in a pathway leading to biosynthesis of strigolactones. The polypeptide is Protein NODULATION SIGNALING PATHWAY 2 (Medicago truncatula (Barrel medic)).